The sequence spans 968 residues: RNA polymerase-associated protein RapA (968 aa).

The Helicase ATP-binding domain maps to aspartate 164–asparagine 334. Aspartate 177 to threonine 184 provides a ligand contact to ATP. The DEAH box signature appears at aspartate 280–histidine 283. Residues arginine 490–aspartate 644 enclose the Helicase C-terminal domain.

Belongs to the SNF2/RAD54 helicase family. RapA subfamily. Interacts with the RNAP. Has a higher affinity for the core RNAP than for the holoenzyme. Its ATPase activity is stimulated by binding to RNAP.

In terms of biological role, transcription regulator that activates transcription by stimulating RNA polymerase (RNAP) recycling in case of stress conditions such as supercoiled DNA or high salt concentrations. Probably acts by releasing the RNAP, when it is trapped or immobilized on tightly supercoiled DNA. Does not activate transcription on linear DNA. Probably not involved in DNA repair. This Salmonella arizonae (strain ATCC BAA-731 / CDC346-86 / RSK2980) protein is RNA polymerase-associated protein RapA.